Reading from the N-terminus, the 326-residue chain is MQSNALLKPRIIDVQSISPVQARVTMEPFERGFGHTLGNALRRILLSSLPGHAPTEVSIEGVLHEYSTLDGMREDIVDLLLNLKGVVLKLHNRSEAMLTLSKSGEGVVTARDIEGGHDVEIINPDHVIAHLAPGGKLEMQIKVEQGRGYVPGNARPVSAENKTIGRIVLDASFSPVRRVSYLVESARVEQRTDLDRLVIDIETNGAVDPEEAIRYAARVLMDQLSVFADLEGTPVAVVPEKTPSIDPVLLRPVDDLELTVRSANCLKAENIYYIGDLIQRTETELLKTPNLGRKSLNEIKEVLASRGLTLGMKLENWPPAGLEKLG.

The segment at 1–231 (MQSNALLKPR…DQLSVFADLE (231 aa)) is alpha N-terminal domain (alpha-NTD). Residues 245–326 (IDPVLLRPVD…WPPAGLEKLG (82 aa)) form an alpha C-terminal domain (alpha-CTD) region.

It belongs to the RNA polymerase alpha chain family. As to quaternary structure, homodimer. The RNAP catalytic core consists of 2 alpha, 1 beta, 1 beta' and 1 omega subunit. When a sigma factor is associated with the core the holoenzyme is formed, which can initiate transcription.

The enzyme catalyses RNA(n) + a ribonucleoside 5'-triphosphate = RNA(n+1) + diphosphate. DNA-dependent RNA polymerase catalyzes the transcription of DNA into RNA using the four ribonucleoside triphosphates as substrates. This chain is DNA-directed RNA polymerase subunit alpha, found in Azoarcus sp. (strain BH72).